Here is a 147-residue protein sequence, read N- to C-terminus: Cyanate hydratase (147 aa).

Catalysis depends on residues Arg-88, Glu-91, and Ser-114.

Belongs to the cyanase family.

It catalyses the reaction cyanate + hydrogencarbonate + 3 H(+) = NH4(+) + 2 CO2. In terms of biological role, catalyzes the reaction of cyanate with bicarbonate to produce ammonia and carbon dioxide. This chain is Cyanate hydratase, found in Albidiferax ferrireducens (strain ATCC BAA-621 / DSM 15236 / T118) (Rhodoferax ferrireducens).